A 295-amino-acid polypeptide reads, in one-letter code: Protein shisa-2 homolog (295 aa).

Positions 1–33 (MWGARRSSVSSSWNAASLLQLLLAALLAAGARA) are cleaved as a signal peptide. Topologically, residues 34-110 (SGEYCHGWLD…RADKDGPDGS (77 aa)) are extracellular. Positions 87-108 (GCDNDRQQGAGEPGRADKDGPD) are disordered. The chain crosses the membrane as a helical span at residues 111 to 131 (AVPIYVPFLIVGSVFVAFIIL). Over 132–295 (GSLVAACCCR…EQKMYPAVTV (164 aa)) the chain is Cytoplasmic. The interval 168-205 (PSASTSRGSSSRQSSTAASSSSSANSGARAPPTRSQTN) is disordered. A compositionally biased stretch (low complexity) spans 169-197 (SASTSRGSSSRQSSTAASSSSSANSGARA).

Belongs to the shisa family.

Its subcellular location is the endoplasmic reticulum membrane. Its function is as follows. Plays an essential role in the maturation of presomitic mesoderm cells by individual attenuation of both FGF and WNT signaling. This is Protein shisa-2 homolog (SHISA2) from Homo sapiens (Human).